A 157-amino-acid polypeptide reads, in one-letter code: Ribosomal RNA large subunit methyltransferase H (157 aa).

Residues L74, G106, and 125-130 contribute to the S-adenosyl-L-methionine site; that span reads LGNITF.

It belongs to the RNA methyltransferase RlmH family. In terms of assembly, homodimer.

It localises to the cytoplasm. It carries out the reaction pseudouridine(1915) in 23S rRNA + S-adenosyl-L-methionine = N(3)-methylpseudouridine(1915) in 23S rRNA + S-adenosyl-L-homocysteine + H(+). Specifically methylates the pseudouridine at position 1915 (m3Psi1915) in 23S rRNA. In Lawsonia intracellularis (strain PHE/MN1-00), this protein is Ribosomal RNA large subunit methyltransferase H.